The sequence spans 617 residues: MQNKYPLLSQINSPEDLRLLAKEQLQSVADELRAYLLESVSQTSGHLASGLGVVELTVALHYVYQTPFDQLIWDVGHQAYPHKILTGRRDQMHTIRQKNGIHPFPWREESLYDVLSVGHSSTSISAGVGIAVAAEKENAGRKTVCVIGDGAITAGMAFEAMNHAGALHTDMLVILNDNEMSISENVGALNNHLARIFSGSIYTTVRDGSKKVLDKVPTIKNFMKKSEEHMKGVISPESTLFEELGFNYIGPIDGHNIDELVKTLSNMRELKGPQFLHIRTKKGKGYEPAENDPIGYHGVPKFDPTCGQLPKSKTIPTYSDIFGNWLCEMAEQDSKLIGITPAMREGSGMVEFSKRFPEQYFDVAIAEQHAVTFGAGLAIAGYKPVVAIYSSFLQRAYDQLIHDVAIQNLPVIFAIDRAGIVGADGQTHQGAFDVSFMRCIPNMTIMCPSDENEMRQMLYTAYRMNTPTAVRYPRGNAQGVALAPMQALEVGKGKLIQQGQKVAILNFGPLLNEARIVAEKHNYTLADMRFVKPLDEQLVAELADSHELLVTLEENAIQGGAGSAVNEYLQKIGKIRPLVMLGIPDFFVPQATQAESYADLGLDAAGIEQRIQAVVNQ.

Residues H77 and 118–120 (GHS) contribute to the thiamine diphosphate site. D149 contributes to the Mg(2+) binding site. Thiamine diphosphate-binding positions include 150–151 (GA), N178, Y286, and E367. Mg(2+) is bound at residue N178.

It belongs to the transketolase family. DXPS subfamily. Homodimer. It depends on Mg(2+) as a cofactor. The cofactor is thiamine diphosphate.

It carries out the reaction D-glyceraldehyde 3-phosphate + pyruvate + H(+) = 1-deoxy-D-xylulose 5-phosphate + CO2. It participates in metabolic intermediate biosynthesis; 1-deoxy-D-xylulose 5-phosphate biosynthesis; 1-deoxy-D-xylulose 5-phosphate from D-glyceraldehyde 3-phosphate and pyruvate: step 1/1. Its function is as follows. Catalyzes the acyloin condensation reaction between C atoms 2 and 3 of pyruvate and glyceraldehyde 3-phosphate to yield 1-deoxy-D-xylulose-5-phosphate (DXP). This chain is 1-deoxy-D-xylulose-5-phosphate synthase, found in Actinobacillus pleuropneumoniae serotype 5b (strain L20).